The chain runs to 179 residues: Large ribosomal subunit protein uL6 (179 aa).

The protein belongs to the universal ribosomal protein uL6 family. As to quaternary structure, part of the 50S ribosomal subunit.

In terms of biological role, this protein binds to the 23S rRNA, and is important in its secondary structure. It is located near the subunit interface in the base of the L7/L12 stalk, and near the tRNA binding site of the peptidyltransferase center. This chain is Large ribosomal subunit protein uL6, found in Prochlorococcus marinus (strain MIT 9515).